The chain runs to 281 residues: uncharacterized protein (281 aa).

The first 23 residues, 1 to 23 (MKLYRSLKAALLPGICTSILLAS), serve as a signal peptide directing secretion. A lipid anchor (N-palmitoyl cysteine) is attached at C24. C24 is lipidated: S-diacylglycerol cysteine. Positions 145–165 (HHDHNHMHNHEHEHEEHHDEE) are disordered. The span at 150-161 (HMHNHEHEHEEH) shows a compositional bias: basic and acidic residues.

Its subcellular location is the cell membrane. This is an uncharacterized protein from Mycoplasma genitalium (strain ATCC 33530 / DSM 19775 / NCTC 10195 / G37) (Mycoplasmoides genitalium).